The sequence spans 456 residues: Antigen Lp49 (456 aa).

Positions 1–34 (MNSNPKKKFLKLIKIKSDIILLIPIFLFLVCCKS) are cleaved as a signal peptide. The cysteines at positions 346 and 347 are disulfide-linked.

It localises to the cell outer membrane. Its function is as follows. May be involved in virulence. Binds human plasminogen (PLG) and stimulates its proteolytic cleavage to enzymatically active plasmin in the presence of an urokinase-type PLG activator in vitro. Activated plasmin has proteolytic activity which may help the bacteria to spread throughout the host by degrading extracellular matrix components, facilitating tissue penetration and invasion. In Leptospira interrogans serogroup Icterohaemorrhagiae serovar copenhageni (strain Fiocruz L1-130), this protein is Antigen Lp49.